We begin with the raw amino-acid sequence, 261 residues long: Cytochrome c oxidase subunit 3 (261 aa).

Helical transmembrane passes span 31 to 51, 82 to 102, 126 to 146, 159 to 179, 197 to 217, and 239 to 259; these read LVLWFHTGNIILLFTGLLLLI, PMILFITSEVCFFFAFFWAFF, PFLVPLLNTAVLLSSGVTITW, AIQALFLTVVLGIYFTILQAW, FFVATGFHGLHVIIGTTFLLV, and AWYWHFVDVVWLFLYVCIYWW.

Belongs to the cytochrome c oxidase subunit 3 family. Component of the cytochrome c oxidase (complex IV, CIV), a multisubunit enzyme composed of a catalytic core of 3 subunits and several supernumerary subunits. The complex exists as a monomer or a dimer and forms supercomplexes (SCs) in the inner mitochondrial membrane with ubiquinol-cytochrome c oxidoreductase (cytochrome b-c1 complex, complex III, CIII).

It is found in the mitochondrion inner membrane. The enzyme catalyses 4 Fe(II)-[cytochrome c] + O2 + 8 H(+)(in) = 4 Fe(III)-[cytochrome c] + 2 H2O + 4 H(+)(out). Functionally, component of the cytochrome c oxidase, the last enzyme in the mitochondrial electron transport chain which drives oxidative phosphorylation. The respiratory chain contains 3 multisubunit complexes succinate dehydrogenase (complex II, CII), ubiquinol-cytochrome c oxidoreductase (cytochrome b-c1 complex, complex III, CIII) and cytochrome c oxidase (complex IV, CIV), that cooperate to transfer electrons derived from NADH and succinate to molecular oxygen, creating an electrochemical gradient over the inner membrane that drives transmembrane transport and the ATP synthase. Cytochrome c oxidase is the component of the respiratory chain that catalyzes the reduction of oxygen to water. Electrons originating from reduced cytochrome c in the intermembrane space (IMS) are transferred via the dinuclear copper A center (CU(A)) of subunit 2 and heme A of subunit 1 to the active site in subunit 1, a binuclear center (BNC) formed by heme A3 and copper B (CU(B)). The BNC reduces molecular oxygen to 2 water molecules using 4 electrons from cytochrome c in the IMS and 4 protons from the mitochondrial matrix. The sequence is that of Cytochrome c oxidase subunit 3 (COIII) from Paracentrotus lividus (Common sea urchin).